The following is a 712-amino-acid chain: Probable metal-nicotianamine transporter YSL11 (712 aa).

Residues 25–48 (RRNTTAAARGNAGEEEEEAEAVAP) form a disordered region. The next 14 helical transmembrane spans lie at 70–90 (AFVVGFLLSIMFNIIVMKLSL), 93–113 (GVIPSLNVSASLLGFFLVRLW), 138–158 (CVVSAYGVAFSGGFGSYLFGM), 180–200 (LGWIIGFMFLVSFVGLFALVP), 242–262 (LGKYFSISFLWAFFQWFYTAG), 300–320 (IVNVSLLIGGIISWGIMWPLI), 345–365 (VFITIAVILGDGLYNFVKVFG), 418–438 (VAIGGYVVLAVITSGCLPLII), 446–466 (ILIAYIFAPIMAFCNAYGSGL), 478–498 (LAIFVFGAWAGASHGGVLVGL), 532–552 (FVSQVIGTAMGCVIAPCVFWL), 593–613 (LTLCYIAFVAAFIINLIKDLV), 631–651 (FYLGPYFAIDMFMGSVILYFW), and 666–686 (VASGLMCGDGLWALPQAVLSL).

It belongs to the YSL (TC 2.A.67.2) family.

The protein resides in the membrane. May be involved in the transport of nicotianamine-chelated metals. The protein is Probable metal-nicotianamine transporter YSL11 (YSL11) of Oryza sativa subsp. japonica (Rice).